The chain runs to 361 residues: Histidinol-phosphate aminotransferase (361 aa).

Residue Lys-224 is modified to N6-(pyridoxal phosphate)lysine.

This sequence belongs to the class-II pyridoxal-phosphate-dependent aminotransferase family. Histidinol-phosphate aminotransferase subfamily. As to quaternary structure, homodimer. Requires pyridoxal 5'-phosphate as cofactor.

The enzyme catalyses L-histidinol phosphate + 2-oxoglutarate = 3-(imidazol-4-yl)-2-oxopropyl phosphate + L-glutamate. It participates in amino-acid biosynthesis; L-histidine biosynthesis; L-histidine from 5-phospho-alpha-D-ribose 1-diphosphate: step 7/9. This chain is Histidinol-phosphate aminotransferase, found in Limosilactobacillus fermentum (strain NBRC 3956 / LMG 18251) (Lactobacillus fermentum).